The chain runs to 438 residues: Myosin light chain kinase, smooth muscle (438 aa).

Residues 1–241 (FRLVEKKTGK…CTQCLQHPWL (241 aa)) form the Protein kinase domain. Residue Lys15 coordinates ATP. Tyr97 carries the post-translational modification Phosphotyrosine; by ABL1. Catalysis depends on Asp107, which acts as the Proton acceptor. Residue Tyr157 is modified to Phosphotyrosine; by ABL1. The interval 233–296 (TQCLQHPWLX…SGLSGRKSST (64 aa)) is calmodulin-binding. 5 positions are modified to phosphoserine: Ser281, Ser282, Ser294, Ser295, and Ser298. Residues 283–438 (MAMISGLSGR…GEGGEEEEEE (156 aa)) form a telokin region. A disordered region spans residues 289 to 309 (LSGRKSSTGSPTSPLNAEKLE). Polar residues predominate over residues 292 to 303 (RKSSTGSPTSPL). Thr300 is subject to Phosphothreonine. Residue Ser301 is modified to Phosphoserine. Positions 331–420 (PYFSKTIRDL…GEATCTAELI (90 aa)) constitute an Ig-like C2-type domain. An intrachain disulfide couples Cys352 to Cys404.

The protein belongs to the protein kinase superfamily. CAMK Ser/Thr protein kinase family. In terms of assembly, all isoforms including Telokin bind calmodulin. Interacts with SVIL. Interacts with CTTN; this interaction is reduced during thrombin-induced endothelial cell (EC) contraction but is promoted by the barrier-protective agonist sphingosine 1-phosphate (S1P) within lamellipodia. A complex made of ABL1, CTTN and MYLK regulates cortical actin-based cytoskeletal rearrangement critical to sphingosine 1-phosphate (S1P)-mediated endothelial cell (EC) barrier enhancement. Binds to NAA10/ARD1 and PTK2B/PYK2. Mg(2+) serves as cofactor. The cofactor is Ca(2+). Post-translationally, the C-terminus is deglutamylated by AGTPBP1/CCP1, AGBL1/CCP4 and AGBL4/CCP6, leading to the formation of Myosin light chain kinase, smooth muscle, deglutamylated form. The consequences of C-terminal deglutamylation are unknown. In terms of processing, can probably be down-regulated by phosphorylation. Tyrosine phosphorylation by ABL1 increases kinase activity, reverses MLCK-mediated inhibition of Arp2/3-mediated actin polymerization, and enhances CTTN-binding. Phosphorylation by SRC promotes CTTN binding.

It localises to the cytoplasm. The protein resides in the cell projection. The protein localises to the lamellipodium. It is found in the cleavage furrow. Its subcellular location is the cytoskeleton. It localises to the stress fiber. The catalysed reaction is L-seryl-[myosin light chain] + ATP = O-phospho-L-seryl-[myosin light chain] + ADP + H(+). It catalyses the reaction L-threonyl-[myosin light chain] + ATP = O-phospho-L-threonyl-[myosin light chain] + ADP + H(+). Its function is as follows. Calcium/calmodulin-dependent myosin light chain kinase implicated in smooth muscle contraction via phosphorylation of myosin light chains (MLC). Also regulates actin-myosin interaction through a non-kinase activity. Phosphorylates PTK2B/PYK2 and myosin light-chains. Involved in the inflammatory response (e.g. apoptosis, vascular permeability, leukocyte diapedesis), cell motility and morphology, airway hyperreactivity and other activities relevant to asthma. Required for tonic airway smooth muscle contraction that is necessary for physiological and asthmatic airway resistance. Necessary for gastrointestinal motility. Implicated in the regulation of endothelial as well as vascular permeability, probably via the regulation of cytoskeletal rearrangements. In the nervous system it has been shown to control the growth initiation of astrocytic processes in culture and to participate in transmitter release at synapses formed between cultured sympathetic ganglion cells. Critical participant in signaling sequences that result in fibroblast apoptosis. Plays a role in the regulation of epithelial cell survival. Required for epithelial wound healing, especially during actomyosin ring contraction during purse-string wound closure. Mediates RhoA-dependent membrane blebbing. Triggers TRPC5 channel activity in a calcium-dependent signaling, by inducing its subcellular localization at the plasma membrane. Promotes cell migration (including tumor cells) and tumor metastasis. PTK2B/PYK2 activation by phosphorylation mediates ITGB2 activation and is thus essential to trigger neutrophil transmigration during acute lung injury (ALI). May regulate optic nerve head astrocyte migration. Probably involved in mitotic cytoskeletal regulation. Regulates tight junction probably by modulating ZO-1 exchange in the perijunctional actomyosin ring. Mediates burn-induced microvascular barrier injury; triggers endothelial contraction in the development of microvascular hyperpermeability by phosphorylating MLC. Essential for intestinal barrier dysfunction. Mediates Giardia spp.-mediated reduced epithelial barrier function during giardiasis intestinal infection via reorganization of cytoskeletal F-actin and tight junctional ZO-1. Necessary for hypotonicity-induced Ca(2+) entry and subsequent activation of volume-sensitive organic osmolyte/anion channels (VSOAC) in cervical cancer cells. This Ovis aries (Sheep) protein is Myosin light chain kinase, smooth muscle (MYLK).